Here is a 150-residue protein sequence, read N- to C-terminus: MTFRLIAENRKARFNYEIIEKIEAGIVLQGTEVKSIRAGKMTLADSYAVVNREELYWLNGQIAHYEHGNIHNHEPFRSRKLLLRHKEISRLIGLVKEKGLSIIPLRAYWKGSKVKLELGIAKGKKLYDKRATTKERDWQREKQRILKTNH.

The protein belongs to the SmpB family.

The protein resides in the cytoplasm. In terms of biological role, required for rescue of stalled ribosomes mediated by trans-translation. Binds to transfer-messenger RNA (tmRNA), required for stable association of tmRNA with ribosomes. tmRNA and SmpB together mimic tRNA shape, replacing the anticodon stem-loop with SmpB. tmRNA is encoded by the ssrA gene; the 2 termini fold to resemble tRNA(Ala) and it encodes a 'tag peptide', a short internal open reading frame. During trans-translation Ala-aminoacylated tmRNA acts like a tRNA, entering the A-site of stalled ribosomes, displacing the stalled mRNA. The ribosome then switches to translate the ORF on the tmRNA; the nascent peptide is terminated with the 'tag peptide' encoded by the tmRNA and targeted for degradation. The ribosome is freed to recommence translation, which seems to be the essential function of trans-translation. The protein is SsrA-binding protein of Magnetococcus marinus (strain ATCC BAA-1437 / JCM 17883 / MC-1).